The sequence spans 176 residues: Large ribosomal subunit protein bL19 (176 aa).

It belongs to the bacterial ribosomal protein bL19 family.

Its function is as follows. This protein is located at the 30S-50S ribosomal subunit interface and may play a role in the structure and function of the aminoacyl-tRNA binding site. The protein is Large ribosomal subunit protein bL19 of Sinorhizobium fredii (strain NBRC 101917 / NGR234).